A 339-amino-acid polypeptide reads, in one-letter code: Ketol-acid reductoisomerase (NADP(+)) (339 aa).

A KARI N-terminal Rossmann domain is found at 1–182 (MRVYYDRDAD…GGGRAGIIET (182 aa)). Residues 24 to 27 (YGSQ), R48, S51, S53, and 83 to 86 (DELQ) contribute to the NADP(+) site. The active site involves H108. G134 contacts NADP(+). A KARI C-terminal knotted domain is found at 183-328 (TFKEECETDL…AKLRDMMPWI (146 aa)). Mg(2+) contacts are provided by D191, E195, E227, and E231. Substrate is bound at residue S252.

The protein belongs to the ketol-acid reductoisomerase family. Requires Mg(2+) as cofactor.

It catalyses the reaction (2R)-2,3-dihydroxy-3-methylbutanoate + NADP(+) = (2S)-2-acetolactate + NADPH + H(+). It carries out the reaction (2R,3R)-2,3-dihydroxy-3-methylpentanoate + NADP(+) = (S)-2-ethyl-2-hydroxy-3-oxobutanoate + NADPH + H(+). Its pathway is amino-acid biosynthesis; L-isoleucine biosynthesis; L-isoleucine from 2-oxobutanoate: step 2/4. The protein operates within amino-acid biosynthesis; L-valine biosynthesis; L-valine from pyruvate: step 2/4. Functionally, involved in the biosynthesis of branched-chain amino acids (BCAA). Catalyzes an alkyl-migration followed by a ketol-acid reduction of (S)-2-acetolactate (S2AL) to yield (R)-2,3-dihydroxy-isovalerate. In the isomerase reaction, S2AL is rearranged via a Mg-dependent methyl migration to produce 3-hydroxy-3-methyl-2-ketobutyrate (HMKB). In the reductase reaction, this 2-ketoacid undergoes a metal-dependent reduction by NADPH to yield (R)-2,3-dihydroxy-isovalerate. This is Ketol-acid reductoisomerase (NADP(+)) from Bradyrhizobium diazoefficiens (strain JCM 10833 / BCRC 13528 / IAM 13628 / NBRC 14792 / USDA 110).